The chain runs to 197 residues: GTP cyclohydrolase-2 (197 aa).

50-54 (RIHSE) provides a ligand contact to GTP. Zn(2+)-binding residues include Cys-55, Cys-66, and Cys-68. GTP-binding positions include Gln-71, 93-95 (EGR), and Thr-115. The active-site Proton acceptor is Asp-127. The Nucleophile role is filled by Arg-129. The GTP site is built by Thr-150 and Lys-155.

Belongs to the GTP cyclohydrolase II family. Zn(2+) is required as a cofactor.

It carries out the reaction GTP + 4 H2O = 2,5-diamino-6-hydroxy-4-(5-phosphoribosylamino)-pyrimidine + formate + 2 phosphate + 3 H(+). The protein operates within cofactor biosynthesis; riboflavin biosynthesis; 5-amino-6-(D-ribitylamino)uracil from GTP: step 1/4. Its function is as follows. Catalyzes the conversion of GTP to 2,5-diamino-6-ribosylamino-4(3H)-pyrimidinone 5'-phosphate (DARP), formate and pyrophosphate. The polypeptide is GTP cyclohydrolase-2 (Tolumonas auensis (strain DSM 9187 / NBRC 110442 / TA 4)).